A 171-amino-acid polypeptide reads, in one-letter code: 3-hydroxydecanoyl-[acyl-carrier-protein] dehydratase (171 aa).

The active site involves His70.

This sequence belongs to the thioester dehydratase family. FabA subfamily. As to quaternary structure, homodimer.

Its subcellular location is the cytoplasm. It carries out the reaction a (3R)-hydroxyacyl-[ACP] = a (2E)-enoyl-[ACP] + H2O. The catalysed reaction is (3R)-hydroxydecanoyl-[ACP] = (2E)-decenoyl-[ACP] + H2O. The enzyme catalyses (2E)-decenoyl-[ACP] = (3Z)-decenoyl-[ACP]. Its pathway is lipid metabolism; fatty acid biosynthesis. Necessary for the introduction of cis unsaturation into fatty acids. Catalyzes the dehydration of (3R)-3-hydroxydecanoyl-ACP to E-(2)-decenoyl-ACP and then its isomerization to Z-(3)-decenoyl-ACP. Can catalyze the dehydratase reaction for beta-hydroxyacyl-ACPs with saturated chain lengths up to 16:0, being most active on intermediate chain length. The sequence is that of 3-hydroxydecanoyl-[acyl-carrier-protein] dehydratase from Shewanella putrefaciens (strain CN-32 / ATCC BAA-453).